The following is a 106-amino-acid chain: Thiosulfate sulfurtransferase GlpE (106 aa).

Residues 16–104 (REQGAVLVDV…WRATYPDETV (89 aa)) enclose the Rhodanese domain. The Cysteine persulfide intermediate role is filled by cysteine 64.

It belongs to the GlpE family.

Its subcellular location is the cytoplasm. The catalysed reaction is thiosulfate + hydrogen cyanide = thiocyanate + sulfite + 2 H(+). It carries out the reaction thiosulfate + [thioredoxin]-dithiol = [thioredoxin]-disulfide + hydrogen sulfide + sulfite + 2 H(+). Functionally, transferase that catalyzes the transfer of sulfur from thiosulfate to thiophilic acceptors such as cyanide or dithiols. May function in a CysM-independent thiosulfate assimilation pathway by catalyzing the conversion of thiosulfate to sulfite, which can then be used for L-cysteine biosynthesis. This is Thiosulfate sulfurtransferase GlpE from Pseudomonas savastanoi pv. phaseolicola (strain 1448A / Race 6) (Pseudomonas syringae pv. phaseolicola (strain 1448A / Race 6)).